The sequence spans 405 residues: Phosphoglycerate kinase (405 aa).

Substrate-binding positions include 24–26 (DFN), R40, 63–66 (HLGR), R122, and R162. ATP is bound by residues K212, E331, and 361–364 (GGDS).

The protein belongs to the phosphoglycerate kinase family. As to quaternary structure, monomer.

It is found in the cytoplasm. The enzyme catalyses (2R)-3-phosphoglycerate + ATP = (2R)-3-phospho-glyceroyl phosphate + ADP. The protein operates within carbohydrate degradation; glycolysis; pyruvate from D-glyceraldehyde 3-phosphate: step 2/5. The sequence is that of Phosphoglycerate kinase from Corynebacterium glutamicum (strain R).